A 206-amino-acid polypeptide reads, in one-letter code: Large ribosomal subunit protein uL3 (206 aa).

This sequence belongs to the universal ribosomal protein uL3 family. Part of the 50S ribosomal subunit. Forms a cluster with proteins L14 and L19.

Its function is as follows. One of the primary rRNA binding proteins, it binds directly near the 3'-end of the 23S rRNA, where it nucleates assembly of the 50S subunit. In Thermus thermophilus (strain ATCC BAA-163 / DSM 7039 / HB27), this protein is Large ribosomal subunit protein uL3.